Here is a 536-residue protein sequence, read N- to C-terminus: Probable E3 ubiquitin-protein ligase ARI13 (536 aa).

Positions 83–328 (KISSCGICFK…GFYKFCNVSM (246 aa)) are TRIAD supradomain. 24 residues coordinate Zn(2+): Cys-87, Cys-90, Cys-106, His-108, Cys-111, Cys-114, Cys-135, Cys-140, Cys-180, Cys-185, Cys-210, Cys-212, Cys-217, Cys-220, His-225, Cys-230, Cys-277, Cys-280, Cys-297, Cys-299, Cys-304, Cys-307, His-314, and Cys-324. The segment at 87–140 (CGICFKTCDDGDYLISTPFCSHMFCKSCWRKYLEKNFYLVEKTQTRISCPHGAC) adopts an RING-type 1 zinc-finger fold. The IBR-type zinc-finger motif lies at 158–230 (EMYVEYILRS…MLESHKPVTC (73 aa)). The segment at 277 to 307 (CPHCLRPADLGTKQYLRFLTCACNGRFCWKC) adopts an RING-type 2; atypical zinc-finger fold. A RanBP2-type zinc finger spans residues 495 to 526 (DYGGLFWLCDRCTYGNTWFHKECLMCSDDIAA).

Belongs to the RBR family. Ariadne subfamily. Zn(2+) serves as cofactor.

The enzyme catalyses [E2 ubiquitin-conjugating enzyme]-S-ubiquitinyl-L-cysteine + [acceptor protein]-L-lysine = [E2 ubiquitin-conjugating enzyme]-L-cysteine + [acceptor protein]-N(6)-ubiquitinyl-L-lysine.. Its pathway is protein modification; protein ubiquitination. In terms of biological role, might act as an E3 ubiquitin-protein ligase, or as part of E3 complex, which accepts ubiquitin from specific E2 ubiquitin-conjugating enzymes and then transfers it to substrates. This Arabidopsis thaliana (Mouse-ear cress) protein is Probable E3 ubiquitin-protein ligase ARI13 (ARI13).